We begin with the raw amino-acid sequence, 106 residues long: Nucleoid-associated protein PD_1058 (106 aa).

This sequence belongs to the YbaB/EbfC family. As to quaternary structure, homodimer.

The protein resides in the cytoplasm. It localises to the nucleoid. Functionally, binds to DNA and alters its conformation. May be involved in regulation of gene expression, nucleoid organization and DNA protection. The polypeptide is Nucleoid-associated protein PD_1058 (Xylella fastidiosa (strain Temecula1 / ATCC 700964)).